The chain runs to 781 residues: Arf-GAP with coiled-coil, ANK repeat and PH domain-containing protein 2 (781 aa).

A BAR domain is found at 1–226; that stretch reads MKVTVDFEEC…MKDLGAQLDQ (226 aa). Positions 266 to 361 constitute a PH domain; sequence GIVMEGYLFK…WIKAVQTSIA (96 aa). Positions 365 to 378 are enriched in basic and acidic residues; that stretch reads REKGDESEKQEKKS. Positions 365 to 390 are disordered; that stretch reads REKGDESEKQEKKSSPSTGSLESGSE. The segment covering 379 to 388 has biased composition (low complexity); sequence SPSTGSLESG. Residues 399–521 form the Arf-GAP domain; the sequence is ESALQRVQCI…KFVEKQPAAA (123 aa). The C4-type zinc-finger motif lies at 414–437; sequence CCDCGLADPRWASINLGITLCIEC. Residues 520–576 are disordered; it reads AAVSPLESRTKVLPQSQEEKRHSAPEKSFLAIEQGAASPRVRSSDSGIQQSVDDSRE. ANK repeat units follow at residues 642–671, 675–704, and 708–737; these read NKATPLIQAVRGGSLVTCEFLLQNGANVNI, KGRGPLHHATVLGHTGQVCLFLKRGANQHA, and DGKDPLSIAVEAANADIVTLLRLARMNEEM.

It localises to the endosome membrane. The protein localises to the cell membrane. Its activity is regulated as follows. GAP activity stimulated by phosphatidylinositol 4,5-bisphosphate (PIP2) and phosphatidic acid. Functionally, GTPase-activating protein (GAP) for ADP ribosylation factor 6 (ARF6). The sequence is that of Arf-GAP with coiled-coil, ANK repeat and PH domain-containing protein 2 (ACAP2) from Gallus gallus (Chicken).